A 218-amino-acid chain; its full sequence is Small ribosomal subunit protein uS3c (218 aa).

Positions 47 to 118 (VQKHMRVSSG…RLNIAITRVA (72 aa)) constitute a KH type-2 domain.

The protein belongs to the universal ribosomal protein uS3 family. In terms of assembly, part of the 30S ribosomal subunit.

The protein localises to the plastid. The protein resides in the chloroplast. In Illicium oligandrum (Star anise), this protein is Small ribosomal subunit protein uS3c (rps3).